Here is a 1976-residue protein sequence, read N- to C-terminus: Myosin-10 (1976 aa).

At arginine 18 the chain carries Omega-N-methylarginine. One can recognise a Myosin N-terminal SH3-like domain in the interval 31–81; that stretch reads TAKKLVWIPSERHGFEAASIKEERGDEVLVELAENGKKAMVNKDDIQKMNP. One can recognise a Myosin motor domain in the interval 85–783; sequence SKVEDMAELT…VLAHLEEERD (699 aa). ATP is bound at residue 178–185; it reads GESGAGKT. Lysine 442 carries the post-translational modification N6-acetyllysine. The tract at residues 661 to 683 is actin-binding; the sequence is LTKLMATLRNTNPNFVRCIIPNH. The region spanning 786–815 is the IQ domain; the sequence is ITDIIIFFQAVCRGYLARKAFAKKQQQLSA. The stretch at 845-1976 forms a coiled coil; the sequence is LQVTRQEEEL…INETQPPQSE (1132 aa). The disordered stretch occupies residues 1126–1149; that stretch reads DFESEKASRNKAEKQKRDLSEELE. Residues 1129–1149 are compositionally biased toward basic and acidic residues; that stretch reads SEKASRNKAEKQKRDLSEELE. Serine 1145 bears the Phosphoserine mark. 3 positions are modified to N6-acetyllysine: lysine 1241, lysine 1301, and lysine 1645. Disordered regions lie at residues 1697-1718 and 1874-1976; these read ASSE…DEIA and KANA…PQSE. Residues 1698-1708 show a composition bias toward basic and acidic residues; sequence SSERARRHAEQ. Arginine 1930 is modified (omega-N-methylarginine). Serine 1935, serine 1937, serine 1938, and serine 1939 each carry phosphoserine. The residue at position 1940 (arginine 1940) is an Omega-N-methylarginine. Phosphoserine is present on residues serine 1952 and serine 1956. Position 1960 is a phosphothreonine (threonine 1960). The span at 1967 to 1976 shows a compositional bias: polar residues; sequence INETQPPQSE. A Phosphoserine modification is found at serine 1975.

The protein belongs to the TRAFAC class myosin-kinesin ATPase superfamily. Myosin family. Myosin is a hexameric protein that consists of 2 heavy chain subunits (MHC), 2 alkali light chain subunits (MLC) and 2 regulatory light chain subunits (MLC-2). Interacts with PLEKHG6. Interacts with ECPAS. Interacts with KIF26B. Interacts with LARP6. Interacts with MCC. Interacts with CFAP95. Phosphorylated by ABL2.

It localises to the cell projection. Its subcellular location is the lamellipodium. Cellular myosin that appears to play a role in cytokinesis, cell shape, and specialized functions such as secretion and capping. Involved with LARP6 in the stabilization of type I collagen mRNAs for CO1A1 and CO1A2. During cell spreading, plays an important role in cytoskeleton reorganization, focal contacts formation (in the central part but not the margins of spreading cells), and lamellipodial extension; this function is mechanically antagonized by MYH9. This is Myosin-10 (MYH10) from Bos taurus (Bovine).